Consider the following 711-residue polypeptide: Polyribonucleotide nucleotidyltransferase (711 aa).

Residues Asp490 and Asp496 each contribute to the Mg(2+) site. In terms of domain architecture, KH spans 557–619; sequence PRIETMTIPK…KCIDDAMRII (63 aa). The S1 motif domain maps to 629 to 699; that stretch reads GEVYVGKVRS…KTGKFKLSHK (71 aa).

This sequence belongs to the polyribonucleotide nucleotidyltransferase family. Requires Mg(2+) as cofactor.

It is found in the cytoplasm. It carries out the reaction RNA(n+1) + phosphate = RNA(n) + a ribonucleoside 5'-diphosphate. Its function is as follows. Involved in mRNA degradation. Catalyzes the phosphorolysis of single-stranded polyribonucleotides processively in the 3'- to 5'-direction. The polypeptide is Polyribonucleotide nucleotidyltransferase (Phocaeicola vulgatus (strain ATCC 8482 / DSM 1447 / JCM 5826 / CCUG 4940 / NBRC 14291 / NCTC 11154) (Bacteroides vulgatus)).